Here is a 326-residue protein sequence, read N- to C-terminus: Malate dehydrogenase (326 aa).

An NAD(+)-binding site is contributed by 11-17 (GAAGQIG). The substrate site is built by arginine 92 and arginine 98. Residues asparagine 105, glutamine 112, and 129-131 (VGN) each bind NAD(+). Positions 131 and 162 each coordinate substrate. Histidine 187 (proton acceptor) is an active-site residue.

This sequence belongs to the LDH/MDH superfamily. MDH type 2 family.

The catalysed reaction is (S)-malate + NAD(+) = oxaloacetate + NADH + H(+). Catalyzes the reversible oxidation of malate to oxaloacetate. In Alkalilimnicola ehrlichii (strain ATCC BAA-1101 / DSM 17681 / MLHE-1), this protein is Malate dehydrogenase.